The chain runs to 1192 residues: ATP-dependent helicase/deoxyribonuclease subunit B (1192 aa).

It belongs to the helicase family. AddB/RexB type 2 subfamily. In terms of assembly, heterodimer of AddA and RexB. The cofactor is Mg(2+).

Functionally, the heterodimer acts as both an ATP-dependent DNA helicase and an ATP-dependent, dual-direction single-stranded exonuclease. Recognizes the chi site generating a DNA molecule suitable for the initiation of homologous recombination. This subunit has 5' -&gt; 3' nuclease activity but not helicase activity. This is ATP-dependent helicase/deoxyribonuclease subunit B from Pediococcus pentosaceus (strain ATCC 25745 / CCUG 21536 / LMG 10740 / 183-1w).